The chain runs to 151 residues: Putative pre-16S rRNA nuclease (151 aa).

The protein belongs to the YqgF nuclease family.

The protein localises to the cytoplasm. Its function is as follows. Could be a nuclease involved in processing of the 5'-end of pre-16S rRNA. This is Putative pre-16S rRNA nuclease from Neisseria meningitidis serogroup C (strain 053442).